The primary structure comprises 335 residues: Glyceraldehyde-3-phosphate dehydrogenase (335 aa).

NAD(+) contacts are provided by residues 13–14 and glycine 111; that span reads TI. D-glyceraldehyde 3-phosphate is bound at residue 140 to 142; the sequence is SCN. The active-site Nucleophile is cysteine 141. Arginine 169 is an NAD(+) binding site. D-glyceraldehyde 3-phosphate is bound at residue 195-196; sequence HG. NAD(+) is bound at residue glutamine 300.

This sequence belongs to the glyceraldehyde-3-phosphate dehydrogenase family. As to quaternary structure, homotetramer.

Its subcellular location is the cytoplasm. The enzyme catalyses D-glyceraldehyde 3-phosphate + phosphate + NADP(+) = (2R)-3-phospho-glyceroyl phosphate + NADPH + H(+). It catalyses the reaction D-glyceraldehyde 3-phosphate + phosphate + NAD(+) = (2R)-3-phospho-glyceroyl phosphate + NADH + H(+). It participates in carbohydrate degradation; glycolysis; pyruvate from D-glyceraldehyde 3-phosphate: step 1/5. The sequence is that of Glyceraldehyde-3-phosphate dehydrogenase from Methanococcoides burtonii (strain DSM 6242 / NBRC 107633 / OCM 468 / ACE-M).